The sequence spans 584 residues: Putative poly(A) polymerase catalytic subunit (584 aa).

The span at 522–531 (EAEISEKEET) shows a compositional bias: basic and acidic residues. The segment at 522–584 (EAEISEKEET…ENSLDSLTSD (63 aa)) is disordered. Residues 546–569 (SPNSSPNSSPNNSLNNSIDISTNN) show a composition bias toward low complexity.

The protein belongs to the poxviridae poly(A) polymerase catalytic subunit family. Highly divergent.

Its subcellular location is the virion. The catalysed reaction is RNA(n) + ATP = RNA(n)-3'-adenine ribonucleotide + diphosphate. Polymerase that creates the 3'-poly(A) tail of mRNA's. The protein is Putative poly(A) polymerase catalytic subunit of Acanthamoeba polyphaga (Amoeba).